The primary structure comprises 176 residues: Inorganic pyrophosphatase (176 aa).

Positions 30, 44, and 56 each coordinate substrate. Positions 66, 71, and 103 each coordinate Mg(2+). Y142 is a substrate binding site.

This sequence belongs to the PPase family. As to quaternary structure, homohexamer. Requires Mg(2+) as cofactor.

It is found in the cytoplasm. It catalyses the reaction diphosphate + H2O = 2 phosphate + H(+). Functionally, catalyzes the hydrolysis of inorganic pyrophosphate (PPi) forming two phosphate ions. This Salmonella typhi protein is Inorganic pyrophosphatase.